The primary structure comprises 457 residues: Siroheme synthase (457 aa).

The tract at residues 1 to 204 (MDHLPIFCQL…NDQKAITETT (204 aa)) is precorrin-2 dehydrogenase /sirohydrochlorin ferrochelatase. NAD(+) is bound by residues 22–23 (DV) and 43–44 (LA). Residue serine 128 is modified to Phosphoserine. The segment at 216-457 (GEVVLVGAGP…RDKLNWFSNH (242 aa)) is uroporphyrinogen-III C-methyltransferase. Position 225 (proline 225) interacts with S-adenosyl-L-methionine. Residue aspartate 248 is the Proton acceptor of the active site. The active-site Proton donor is the lysine 270. S-adenosyl-L-methionine is bound by residues 301–303 (GGD), isoleucine 306, 331–332 (TA), methionine 382, and glycine 411.

This sequence in the N-terminal section; belongs to the precorrin-2 dehydrogenase / sirohydrochlorin ferrochelatase family. The protein in the C-terminal section; belongs to the precorrin methyltransferase family.

The enzyme catalyses uroporphyrinogen III + 2 S-adenosyl-L-methionine = precorrin-2 + 2 S-adenosyl-L-homocysteine + H(+). It carries out the reaction precorrin-2 + NAD(+) = sirohydrochlorin + NADH + 2 H(+). The catalysed reaction is siroheme + 2 H(+) = sirohydrochlorin + Fe(2+). Its pathway is cofactor biosynthesis; adenosylcobalamin biosynthesis; precorrin-2 from uroporphyrinogen III: step 1/1. It participates in cofactor biosynthesis; adenosylcobalamin biosynthesis; sirohydrochlorin from precorrin-2: step 1/1. It functions in the pathway porphyrin-containing compound metabolism; siroheme biosynthesis; precorrin-2 from uroporphyrinogen III: step 1/1. The protein operates within porphyrin-containing compound metabolism; siroheme biosynthesis; siroheme from sirohydrochlorin: step 1/1. Its pathway is porphyrin-containing compound metabolism; siroheme biosynthesis; sirohydrochlorin from precorrin-2: step 1/1. Its function is as follows. Multifunctional enzyme that catalyzes the SAM-dependent methylations of uroporphyrinogen III at position C-2 and C-7 to form precorrin-2 via precorrin-1. Then it catalyzes the NAD-dependent ring dehydrogenation of precorrin-2 to yield sirohydrochlorin. Finally, it catalyzes the ferrochelation of sirohydrochlorin to yield siroheme. The chain is Siroheme synthase from Escherichia coli O157:H7 (strain EC4115 / EHEC).